The sequence spans 88 residues: Cell division topological specificity factor (88 aa).

Belongs to the MinE family.

In terms of biological role, prevents the cell division inhibition by proteins MinC and MinD at internal division sites while permitting inhibition at polar sites. This ensures cell division at the proper site by restricting the formation of a division septum at the midpoint of the long axis of the cell. The chain is Cell division topological specificity factor from Salmonella agona (strain SL483).